Consider the following 168-residue polypeptide: Cell division inhibitor SulA (168 aa).

The ftsZ binding stretch occupies residues 106 to 112 (ALLTGNY). The segment at 161 to 168 (KIHSSLYH) is lon protease binding.

Belongs to the SulA family. As to quaternary structure, interacts with FtsZ. Is rapidly cleaved and degraded by the Lon protease once DNA damage is repaired.

Component of the SOS system and an inhibitor of cell division. Accumulation of SulA causes rapid cessation of cell division and the appearance of long, non-septate filaments. In the presence of GTP, binds a polymerization-competent form of FtsZ in a 1:1 ratio, thus inhibiting FtsZ polymerization and therefore preventing it from participating in the assembly of the Z ring. This mechanism prevents the premature segregation of damaged DNA to daughter cells during cell division. This is Cell division inhibitor SulA from Yersinia enterocolitica serotype O:8 / biotype 1B (strain NCTC 13174 / 8081).